Reading from the N-terminus, the 88-residue chain is Small ribosomal subunit protein uS15 (88 aa).

Belongs to the universal ribosomal protein uS15 family. In terms of assembly, part of the 30S ribosomal subunit. Forms a bridge to the 50S subunit in the 70S ribosome, contacting the 23S rRNA.

In terms of biological role, one of the primary rRNA binding proteins, it binds directly to 16S rRNA where it helps nucleate assembly of the platform of the 30S subunit by binding and bridging several RNA helices of the 16S rRNA. Functionally, forms an intersubunit bridge (bridge B4) with the 23S rRNA of the 50S subunit in the ribosome. This Opitutus terrae (strain DSM 11246 / JCM 15787 / PB90-1) protein is Small ribosomal subunit protein uS15.